Here is a 345-residue protein sequence, read N- to C-terminus: N-acetyl-gamma-glutamyl-phosphate reductase (345 aa).

Cys-149 is an active-site residue.

It belongs to the NAGSA dehydrogenase family. Type 1 subfamily.

The protein resides in the cytoplasm. It catalyses the reaction N-acetyl-L-glutamate 5-semialdehyde + phosphate + NADP(+) = N-acetyl-L-glutamyl 5-phosphate + NADPH + H(+). It functions in the pathway amino-acid biosynthesis; L-arginine biosynthesis; N(2)-acetyl-L-ornithine from L-glutamate: step 3/4. Functionally, catalyzes the NADPH-dependent reduction of N-acetyl-5-glutamyl phosphate to yield N-acetyl-L-glutamate 5-semialdehyde. The sequence is that of N-acetyl-gamma-glutamyl-phosphate reductase from Bacillus cytotoxicus (strain DSM 22905 / CIP 110041 / 391-98 / NVH 391-98).